Here is a 248-residue protein sequence, read N- to C-terminus: Small ribosomal subunit protein uS2 (248 aa).

The protein belongs to the universal ribosomal protein uS2 family.

This Janthinobacterium sp. (strain Marseille) (Minibacterium massiliensis) protein is Small ribosomal subunit protein uS2.